The following is a 341-amino-acid chain: tRNA N6-adenosine threonylcarbamoyltransferase (341 aa).

Fe cation is bound by residues His-111 and His-115. Substrate-binding positions include Leu-134–Gly-138, Asp-167, Gly-180, and Asn-276. Asp-304 is a Fe cation binding site.

Belongs to the KAE1 / TsaD family. Fe(2+) serves as cofactor.

The protein localises to the cytoplasm. It carries out the reaction L-threonylcarbamoyladenylate + adenosine(37) in tRNA = N(6)-L-threonylcarbamoyladenosine(37) in tRNA + AMP + H(+). In terms of biological role, required for the formation of a threonylcarbamoyl group on adenosine at position 37 (t(6)A37) in tRNAs that read codons beginning with adenine. Is involved in the transfer of the threonylcarbamoyl moiety of threonylcarbamoyl-AMP (TC-AMP) to the N6 group of A37, together with TsaE and TsaB. TsaD likely plays a direct catalytic role in this reaction. This Pseudomonas fluorescens (strain ATCC BAA-477 / NRRL B-23932 / Pf-5) protein is tRNA N6-adenosine threonylcarbamoyltransferase.